We begin with the raw amino-acid sequence, 631 residues long: ATP-dependent RNA helicase mrh4, mitochondrial (631 aa).

Residues 1–45 (MNRLGRLPLPLPPSVCLFCQSRATTPLPPSLQATRSMATARLRRR) constitute a mitochondrion transit peptide. A disordered region spans residues 68–111 (KERFGPFAGMNQTEARIRDKPRTRSRAAQKRSGEPEEDSQKESP). Over residues 98 to 108 (RSGEPEEDSQK) the composition is skewed to basic and acidic residues. The Q motif signature appears at 141 to 174 (TSFDQFQLLPVVRNSISSQALPGLVDVTPTPIQR). The segment covering 180–193 (LLEEPKTEKKPTKA) has biased composition (basic and acidic residues). The disordered stretch occupies residues 180–199 (LLEEPKTEKKPTKADDDEPQ). The Helicase ATP-binding domain maps to 194-406 (DDDEPQYDQY…RKRYPDIKRL (213 aa)). Position 207 to 214 (207 to 214 (AETGSGKT)) interacts with ATP. Residues 229 to 249 (EARDKELEKKEQEEKAREREE) form a disordered region. The DEAD box signature appears at 353–356 (DEAD). The Helicase C-terminal domain occupies 455-631 (GPYASYVAPK…EGMFRGQALI (177 aa)).

It belongs to the DEAD box helicase family. MRH4 subfamily.

Its subcellular location is the mitochondrion. The enzyme catalyses ATP + H2O = ADP + phosphate + H(+). In terms of biological role, ATP-binding RNA helicase involved in mitochondrial RNA metabolism. Required for maintenance of mitochondrial DNA. This Neosartorya fischeri (strain ATCC 1020 / DSM 3700 / CBS 544.65 / FGSC A1164 / JCM 1740 / NRRL 181 / WB 181) (Aspergillus fischerianus) protein is ATP-dependent RNA helicase mrh4, mitochondrial (mrh4).